The following is a 294-amino-acid chain: 4-hydroxy-tetrahydrodipicolinate synthase (294 aa).

Position 45 (Thr-45) interacts with pyruvate. The Proton donor/acceptor role is filled by Tyr-133. The active-site Schiff-base intermediate with substrate is the Lys-161. Residue Ile-203 coordinates pyruvate.

This sequence belongs to the DapA family. In terms of assembly, homotetramer; dimer of dimers.

It localises to the cytoplasm. It carries out the reaction L-aspartate 4-semialdehyde + pyruvate = (2S,4S)-4-hydroxy-2,3,4,5-tetrahydrodipicolinate + H2O + H(+). It participates in amino-acid biosynthesis; L-lysine biosynthesis via DAP pathway; (S)-tetrahydrodipicolinate from L-aspartate: step 3/4. Its function is as follows. Catalyzes the condensation of (S)-aspartate-beta-semialdehyde [(S)-ASA] and pyruvate to 4-hydroxy-tetrahydrodipicolinate (HTPA). This chain is 4-hydroxy-tetrahydrodipicolinate synthase, found in Shewanella frigidimarina (strain NCIMB 400).